The primary structure comprises 359 residues: Guanine nucleotide-binding protein subunit alpha-11 (359 aa).

S-palmitoyl cysteine attachment occurs at residues C9 and C10. The G-alpha domain occupies 38-359 (RELKLLLLGT…QLNLKEYNLV (322 aa)). The segment at 41 to 54 (KLLLLGTGESGKST) is G1 motif. Residues 46-53 (GTGESGKS) and 180-183 (LRVR) each bind GTP. S53 provides a ligand contact to Mg(2+). The interval 178 to 186 (DVLRVRVPT) is G2 motif. T186 serves as a coordination point for Mg(2+). The segment at 201–210 (FRMVDVGGQR) is G3 motif. Q209 is modified (deamidated glutamine; by Photorhabdus PAU_02230). A G4 motif region spans residues 270-277 (ILFLNKKD). Residues 274-277 (NKKD) and A331 each bind GTP. Residues 329–334 (TCATDT) are G5 motif.

This sequence belongs to the G-alpha family. G(q) subfamily. In terms of assembly, g proteins are composed of 3 units; alpha, beta and gamma. The alpha chain contains the guanine nucleotide binding site. Interacts with RGS22. Interacts with NTSR1. (Microbial infection) Interacts with human cytomegalovirus (HHV-5) US28. In terms of processing, (Microbial infection) Deamidated at Gln-209 by Photorhabdus asymbiotica toxin PAU_02230, blocking GTP hydrolysis of heterotrimeric GNAQ or GNA11 and G-alphai (GNAI1, GNAI2 or GNAI3) proteins, thereby activating RhoA. As to expression, expressed in testis.

The protein resides in the cell membrane. The protein localises to the cytoplasm. It catalyses the reaction GTP + H2O = GDP + phosphate + H(+). Its function is as follows. Guanine nucleotide-binding proteins (G proteins) function as transducers downstream of G protein-coupled receptors (GPCRs) in numerous signaling cascades. The alpha chain contains the guanine nucleotide binding site and alternates between an active, GTP-bound state and an inactive, GDP-bound state. Signaling by an activated GPCR promotes GDP release and GTP binding. The alpha subunit has a low GTPase activity that converts bound GTP to GDP, thereby terminating the signal. Both GDP release and GTP hydrolysis are modulated by numerous regulatory proteins. Signaling is mediated via phospholipase C-beta-dependent inositol lipid hydrolysis for signal propagation: activates phospholipase C-beta: following GPCR activation, GNA11 activates PLC-beta (PLCB1, PLCB2, PLCB3 or PLCB4), leading to production of diacylglycerol (DAG) and inositol 1,4,5-trisphosphate (IP3). Transduces FFAR4 signaling in response to long-chain fatty acids (LCFAs). Together with GNAQ, required for heart development. In the respiratory epithelium, transmits OXGR1-dependent signals that lead to downstream intracellular Ca(2+) release and mucocilliary clearance of airborne pathogens. This chain is Guanine nucleotide-binding protein subunit alpha-11 (GNA11), found in Homo sapiens (Human).